We begin with the raw amino-acid sequence, 472 residues long: 3beta,22alpha-dihydroxysteroid 3-dehydrogenase (472 aa).

A helical membrane pass occupies residues Met1 to Leu21. Position 418 (Cys418) interacts with heme.

This sequence belongs to the cytochrome P450 family. Heme serves as cofactor.

It localises to the membrane. It carries out the reaction (22S)-22-hydroxycampesterol + reduced [NADPH--hemoprotein reductase] + O2 = (22S)-22-hydroxycampest-4-en-3-one + oxidized [NADPH--hemoprotein reductase] + 2 H2O + H(+). The catalysed reaction is 6-deoxoteasterone + reduced [NADPH--hemoprotein reductase] + O2 = 3-dehydro-6-deoxoteasterone + oxidized [NADPH--hemoprotein reductase] + 2 H2O + H(+). It catalyses the reaction 6-deoxycathasterone + reduced [NADPH--hemoprotein reductase] + O2 = (22S,24R)-22-hydroxy-5alpha-ergostan-3-one + oxidized [NADPH--hemoprotein reductase] + 2 H2O + H(+). The enzyme catalyses (22R,23R)-22,23-dihydroxycampesterol + reduced [NADPH--hemoprotein reductase] + O2 = (22R,23R)-22,23-dihydroxycampest-4-en-3-one + oxidized [NADPH--hemoprotein reductase] + 2 H2O + H(+). It functions in the pathway plant hormone biosynthesis; brassinosteroid biosynthesis. Catalyzes C3-oxidation steps in brassinosteroids biosynthesis. Converts (22S)-22-hydroxycampesterol (22-OHCR) to (22S,24R)-22-hydroxyergost-4-en-3-one (22-hydroxy-campesta-4-en-3-one, 22-OH-4-en-3-one), 6-deoxocathasterone (6-deoxoCT) to (22S,24R)-22-hydroxy-5alpha-ergostan-3-one (22-hydroxy-campesta-3-one, 22-OH-3-one), (22R,23R)-22,23-dihydroxycampesterol (22,23-diOHCR) to (22R,23R)-22,23-dihydroxy-campest-4-en-3-one (22,23-diOH-4-en-3-one), and 6-deoxoteasterone (6-deoxoTE) to 3-dehydro-6-deoxoteasterone (6-deoxo3DT, 6-deoxo-3-DHT). This Arabidopsis thaliana (Mouse-ear cress) protein is 3beta,22alpha-dihydroxysteroid 3-dehydrogenase.